We begin with the raw amino-acid sequence, 608 residues long: UvrABC system protein C (608 aa).

The 79-residue stretch at 22-100 folds into the GIY-YIG domain; that stretch reads EKPGIYQYLN…IKKYKPRYNV (79 aa). The UVR domain maps to 214–249; sequence QEISRLLYQRMQDLAAEMKFEEAQKVKEKYALIENY.

The protein belongs to the UvrC family. Interacts with UvrB in an incision complex.

It is found in the cytoplasm. Its function is as follows. The UvrABC repair system catalyzes the recognition and processing of DNA lesions. UvrC both incises the 5' and 3' sides of the lesion. The N-terminal half is responsible for the 3' incision and the C-terminal half is responsible for the 5' incision. The polypeptide is UvrABC system protein C (Bacteroides fragilis (strain ATCC 25285 / DSM 2151 / CCUG 4856 / JCM 11019 / LMG 10263 / NCTC 9343 / Onslow / VPI 2553 / EN-2)).